The following is a 249-amino-acid chain: Flavodoxin/ferredoxin--NADP reductase (249 aa).

Residues 2 to 102 (NTWITAKIIK…KKSYGFFTLN (101 aa)) enclose the FAD-binding FR-type domain. FAD contacts are provided by residues 51–54 (RAYS), tyrosine 67, 75–77 (QLT), and threonine 117. NADP(+) is bound by residues 144-145 (VR), 174-175 (SR), arginine 185, and 215-217 (NPD). 248–249 (YW) lines the FAD pocket.

This sequence belongs to the ferredoxin--NADP reductase type 1 family. The cofactor is FAD.

Its subcellular location is the cytoplasm. The enzyme catalyses 2 reduced [2Fe-2S]-[ferredoxin] + NADP(+) + H(+) = 2 oxidized [2Fe-2S]-[ferredoxin] + NADPH. It catalyses the reaction reduced [flavodoxin] + NADP(+) = oxidized [flavodoxin] + NADPH + 2 H(+). Its function is as follows. Transports electrons between flavodoxin or ferredoxin and NADPH. The protein is Flavodoxin/ferredoxin--NADP reductase (fpr) of Buchnera aphidicola subsp. Baizongia pistaciae (strain Bp).